The sequence spans 143 residues: Transcriptional regulator MraZ (143 aa).

2 consecutive SpoVT-AbrB domains span residues T5–E47 and A76–A119.

This sequence belongs to the MraZ family. Forms oligomers.

It localises to the cytoplasm. The protein resides in the nucleoid. This Paenarthrobacter aurescens (strain TC1) protein is Transcriptional regulator MraZ.